Here is a 126-residue protein sequence, read N- to C-terminus: Small ribosomal subunit protein uS8 (126 aa).

This sequence belongs to the universal ribosomal protein uS8 family. Part of the 30S ribosomal subunit. Contacts proteins S5 and S12.

Functionally, one of the primary rRNA binding proteins, it binds directly to 16S rRNA central domain where it helps coordinate assembly of the platform of the 30S subunit. In Oleidesulfovibrio alaskensis (strain ATCC BAA-1058 / DSM 17464 / G20) (Desulfovibrio alaskensis), this protein is Small ribosomal subunit protein uS8.